A 326-amino-acid chain; its full sequence is Pyruvate dehydrogenase E1 component subunit beta (326 aa).

Residue Glu62 participates in thiamine diphosphate binding.

In terms of assembly, heterodimer of an alpha and a beta chain. Thiamine diphosphate serves as cofactor.

The catalysed reaction is N(6)-[(R)-lipoyl]-L-lysyl-[protein] + pyruvate + H(+) = N(6)-[(R)-S(8)-acetyldihydrolipoyl]-L-lysyl-[protein] + CO2. Functionally, the pyruvate dehydrogenase complex catalyzes the overall conversion of pyruvate to acetyl-CoA and CO(2). It contains multiple copies of three enzymatic components: pyruvate dehydrogenase (E1), dihydrolipoamide acetyltransferase (E2) and lipoamide dehydrogenase (E3). The polypeptide is Pyruvate dehydrogenase E1 component subunit beta (pdhB) (Mycoplasma genitalium (strain ATCC 33530 / DSM 19775 / NCTC 10195 / G37) (Mycoplasmoides genitalium)).